A 166-amino-acid chain; its full sequence is Disulfide bond formation protein B (166 aa).

The Cytoplasmic segment spans residues 1-11 (MIALPRNRRPL). A helical transmembrane segment spans residues 12–28 (FLAVFAYCAALLAFGLY). Over 29–46 (LQHYQGIEPCPMCIMQRY) the chain is Periplasmic. A disulfide bridge connects residues cysteine 38 and cysteine 41. Residues 47 to 63 (AFALVGVIALVAGLHGP) form a helical membrane-spanning segment. The Cytoplasmic portion of the chain corresponds to 64 to 70 (RGAGVRV). A helical membrane pass occupies residues 71–87 (YGGLLLLTALAGGSVAA). Residues 88–143 (RQTWMQLYPPEIPECGPGLEYMLESFPLTSALPMIFRGAGDCSAIDWTFLGLSLAN) lie on the Periplasmic side of the membrane. Cysteine 102 and cysteine 129 are oxidised to a cystine. A helical membrane pass occupies residues 144–162 (WSLLNFGAAALLALWLLFG). Residues 163 to 166 (RRVR) are Cytoplasmic-facing.

It belongs to the DsbB family.

Its subcellular location is the cell inner membrane. Functionally, required for disulfide bond formation in some periplasmic proteins. Acts by oxidizing the DsbA protein. In Azoarcus sp. (strain BH72), this protein is Disulfide bond formation protein B.